The chain runs to 107 residues: Nucleoid-associated protein Rru_A3472 (107 aa).

This sequence belongs to the YbaB/EbfC family. As to quaternary structure, homodimer.

The protein localises to the cytoplasm. The protein resides in the nucleoid. Binds to DNA and alters its conformation. May be involved in regulation of gene expression, nucleoid organization and DNA protection. This is Nucleoid-associated protein Rru_A3472 from Rhodospirillum rubrum (strain ATCC 11170 / ATH 1.1.1 / DSM 467 / LMG 4362 / NCIMB 8255 / S1).